Reading from the N-terminus, the 494-residue chain is Aspartyl/glutamyl-tRNA(Asn/Gln) amidotransferase subunit B (494 aa).

This sequence belongs to the GatB/GatE family. GatB subfamily. As to quaternary structure, heterotrimer of A, B and C subunits.

It catalyses the reaction L-glutamyl-tRNA(Gln) + L-glutamine + ATP + H2O = L-glutaminyl-tRNA(Gln) + L-glutamate + ADP + phosphate + H(+). The enzyme catalyses L-aspartyl-tRNA(Asn) + L-glutamine + ATP + H2O = L-asparaginyl-tRNA(Asn) + L-glutamate + ADP + phosphate + 2 H(+). Allows the formation of correctly charged Asn-tRNA(Asn) or Gln-tRNA(Gln) through the transamidation of misacylated Asp-tRNA(Asn) or Glu-tRNA(Gln) in organisms which lack either or both of asparaginyl-tRNA or glutaminyl-tRNA synthetases. The reaction takes place in the presence of glutamine and ATP through an activated phospho-Asp-tRNA(Asn) or phospho-Glu-tRNA(Gln). The chain is Aspartyl/glutamyl-tRNA(Asn/Gln) amidotransferase subunit B from Synechococcus sp. (strain CC9605).